The chain runs to 378 residues: tRNA (guanine(26)-N(2))-dimethyltransferase (378 aa).

The Trm1 methyltransferase domain maps to 4–374 (KEVTEGKVRI…KEYEEITKCI (371 aa)). S-adenosyl-L-methionine is bound by residues R44, R69, D87, D114, and A115. Zn(2+)-binding residues include C246, C249, C263, and C266.

The protein belongs to the class I-like SAM-binding methyltransferase superfamily. Trm1 family.

It carries out the reaction guanosine(26) in tRNA + 2 S-adenosyl-L-methionine = N(2)-dimethylguanosine(26) in tRNA + 2 S-adenosyl-L-homocysteine + 2 H(+). Functionally, dimethylates a single guanine residue at position 26 of a number of tRNAs using S-adenosyl-L-methionine as donor of the methyl groups. The chain is tRNA (guanine(26)-N(2))-dimethyltransferase from Saccharolobus solfataricus (strain ATCC 35092 / DSM 1617 / JCM 11322 / P2) (Sulfolobus solfataricus).